The primary structure comprises 63 residues: MSRKCEICGKGVVYGVQYSHSHRQSKRSFAPNIKRVKAIVNGTPKRVHVCTRCLRSGKVQRAI.

This sequence belongs to the bacterial ribosomal protein bL28 family.

This is Large ribosomal subunit protein bL28 from Clostridium botulinum (strain ATCC 19397 / Type A).